We begin with the raw amino-acid sequence, 391 residues long: Deoxyguanosinetriphosphate triphosphohydrolase-like protein (391 aa).

The HD domain maps to 62–198 (RLTHSLEVST…ASLADDISYI (137 aa)).

This sequence belongs to the dGTPase family. Type 2 subfamily.

The sequence is that of Deoxyguanosinetriphosphate triphosphohydrolase-like protein from Rickettsia akari (strain Hartford).